We begin with the raw amino-acid sequence, 199 residues long: dTTP/UTP pyrophosphatase (199 aa).

D76 functions as the Proton acceptor in the catalytic mechanism.

Belongs to the Maf family. YhdE subfamily. A divalent metal cation serves as cofactor.

It localises to the cytoplasm. The catalysed reaction is dTTP + H2O = dTMP + diphosphate + H(+). The enzyme catalyses UTP + H2O = UMP + diphosphate + H(+). Nucleoside triphosphate pyrophosphatase that hydrolyzes dTTP and UTP. May have a dual role in cell division arrest and in preventing the incorporation of modified nucleotides into cellular nucleic acids. The protein is dTTP/UTP pyrophosphatase of Chlorobaculum parvum (strain DSM 263 / NCIMB 8327) (Chlorobium vibrioforme subsp. thiosulfatophilum).